Reading from the N-terminus, the 275-residue chain is MGYVVSTFYRFVHLSNYYDIQPVLKEFCVQHSIKGTIILAEQGINATIAADKQSSLDEFFSFLNLDDRLKDIRYHKSFAMHNPFSKMKVKLRKELVCLGIEDFDNSVCGEYVSPQDWDDLISRSDVYTIDTRNTYEINFGKFKNAINPQTKCFRDFPEWAISWASNKVDQDPIIAMYCTGGIRCEKSTAFMKDLGFSKVYHLKGGILEYFKSTQNKNSLWEGDCFTFDDRIAVDNKLVPAHVKCVSCDVCVTPEEMKSITRGHVLCFNCKENVKI.

One can recognise a Rhodanese domain in the interval 122–218 (SRSDVYTIDT…YFKSTQNKNS (97 aa)). Cysteine 178 acts as the Cysteine persulfide intermediate in catalysis.

The protein belongs to the TrhO family.

The enzyme catalyses uridine(34) in tRNA + AH2 + O2 = 5-hydroxyuridine(34) in tRNA + A + H2O. Its function is as follows. Catalyzes oxygen-dependent 5-hydroxyuridine (ho5U) modification at position 34 in tRNAs. This chain is tRNA uridine(34) hydroxylase, found in Ehrlichia chaffeensis (strain ATCC CRL-10679 / Arkansas).